Reading from the N-terminus, the 195-residue chain is MRVAQVVRNTSETQISVKIDLDGTGRQKLATGVPFLDHMLDQIARHGLVDLDIEANGDTHIDDHHTVEDVGITLGQAVAKAVGDRKGIRRYGHSYVPLDEALSRVVIDFSGRPGLEFHVPFTRARIGTFDVDLSIEFFRGFVNHAGVTLHIDNLRGVNAHHQLETVFKAFGRALRMAVELDERAAGQIPSTKGSL.

The protein belongs to the imidazoleglycerol-phosphate dehydratase family.

The protein localises to the cytoplasm. The enzyme catalyses D-erythro-1-(imidazol-4-yl)glycerol 3-phosphate = 3-(imidazol-4-yl)-2-oxopropyl phosphate + H2O. Its pathway is amino-acid biosynthesis; L-histidine biosynthesis; L-histidine from 5-phospho-alpha-D-ribose 1-diphosphate: step 6/9. The chain is Imidazoleglycerol-phosphate dehydratase from Burkholderia pseudomallei (strain 1710b).